The chain runs to 430 residues: Transcription factor PIF4 (430 aa).

Disordered regions lie at residues Gln-42–Thr-71, Met-97–Pro-136, Thr-160–Arg-183, Asp-223–Glu-266, and Ser-405–His-430. The segment covering Thr-43–Leu-60 has biased composition (basic and acidic residues). Over residues Arg-61–Thr-71 the composition is skewed to polar residues. Positions Cys-126–Pro-136 are enriched in pro residues. A compositionally biased stretch (polar residues) spans Thr-160–Leu-175. Over residues Asn-244–Asn-253 the composition is skewed to low complexity. Over residues Arg-257–Glu-266 the composition is skewed to basic and acidic residues. The bHLH domain occupies Arg-257–Leu-306. The segment covering Ser-405–Pro-419 has biased composition (low complexity).

Belongs to the bHLH protein family. Interacts preferentially with the Pfr form of phytochrome B (phyB). Binds DNA as a homodimer, but once bound to DNA, loses its capacity to interact with phyB. Interacts with APRR1/TOC1 and PIF3. Binds to RGL2 and RGA. Forms non-functional heterodimer with HFR1. Interacts with PHYB, CRY1 and CRY2 in the nucleus in response to low blue light (LBL). Interacts with FYPP1 and FYPP3. Associates to PTAC12/HMR/PAP5, which acts as a transcriptional coactivator to trigger the thermoresponsive growth-relevant genes and promote warm-temperature-dependent PIF4 accumulation. Interacts with MED14. As to expression, mainly expressed in leaves, stems and seedlings, and, to a lower extent, in fruits, flowers and roots.

It localises to the nucleus. Its function is as follows. Transcription factor acting negatively in the phytochrome B signaling pathway. May regulate the expression of a subset of genes involved in cell expansion by binding to the G-box motif. Activated by CRY1 and CRY2 in response to low blue light (LBL) by direct binding at chromatin on E-box variant 5'-CA[CT]GTG-3' to stimulate specific gene expression to adapt global physiology (e.g. hypocotyl elongation in low blue light). Element of a PIF4/HMR/MED14-dependent thermoresponsive process; collaboratively with its transcriptional coactivator PTAC12/HMR/PAP5, involved in the regulation of thermoresponsive growth-relevant genes (e.g. mainly involved in biosynthesis and signaling of the phytohormone auxin) leading to daytime warm temperature elicitation of MED14-dependent thermomorphogenesis (e.g. hypocotyl elongation). The polypeptide is Transcription factor PIF4 (Arabidopsis thaliana (Mouse-ear cress)).